The chain runs to 288 residues: Alpha/beta hydrolase domain-containing protein 17B (288 aa).

Residues Ser170, Asp235, and His264 each act as charge relay system in the active site. The residue at position 282 (Ser282) is a Phosphoserine.

Belongs to the AB hydrolase superfamily. ABHD17 family. Palmitoylated on cysteine residues located in a cysteine cluster at the N-terminus which promotes membrane localization. Palmitoylation is required for post-synaptic localization and for depalmitoylating activity towards DLG4/PSD95. In terms of tissue distribution, expressed in brain.

The protein resides in the cell membrane. It localises to the recycling endosome membrane. It is found in the cell projection. The protein localises to the dendritic spine. Its subcellular location is the postsynaptic density membrane. The catalysed reaction is S-hexadecanoyl-L-cysteinyl-[protein] + H2O = L-cysteinyl-[protein] + hexadecanoate + H(+). Functionally, hydrolyzes fatty acids from S-acylated cysteine residues in proteins. Has depalmitoylating activity towards DLG4/PSD95. Has depalmitoylating activity towards GAP43. Has depalmitoylating activity towards MAP6. Has depalmitoylating activity towards NRAS. The chain is Alpha/beta hydrolase domain-containing protein 17B from Mus musculus (Mouse).